The following is a 95-amino-acid chain: Aspartyl/glutamyl-tRNA(Asn/Gln) amidotransferase subunit C (95 aa).

Belongs to the GatC family. Heterotrimer of A, B and C subunits.

It carries out the reaction L-glutamyl-tRNA(Gln) + L-glutamine + ATP + H2O = L-glutaminyl-tRNA(Gln) + L-glutamate + ADP + phosphate + H(+). It catalyses the reaction L-aspartyl-tRNA(Asn) + L-glutamine + ATP + H2O = L-asparaginyl-tRNA(Asn) + L-glutamate + ADP + phosphate + 2 H(+). Functionally, allows the formation of correctly charged Asn-tRNA(Asn) or Gln-tRNA(Gln) through the transamidation of misacylated Asp-tRNA(Asn) or Glu-tRNA(Gln) in organisms which lack either or both of asparaginyl-tRNA or glutaminyl-tRNA synthetases. The reaction takes place in the presence of glutamine and ATP through an activated phospho-Asp-tRNA(Asn) or phospho-Glu-tRNA(Gln). This Bartonella bacilliformis (strain ATCC 35685 / KC583 / Herrer 020/F12,63) protein is Aspartyl/glutamyl-tRNA(Asn/Gln) amidotransferase subunit C.